The sequence spans 509 residues: uncharacterized protein (509 aa).

4 disordered regions span residues 112-131, 152-325, 365-457, and 488-509; these read KSKQNNNGFNGHKGNFSENE, NKNT…NNDS, NNIN…PNQG, and AQQPVSQQNNNVETNQDNVQQQ. Composition is skewed to low complexity over residues 116-127 and 153-184; these read NNNGFNGHKGNF and KNTIITRKNNNNNNSNNNNNNNNNYNQKSNTT. The segment covering 189–217 has biased composition (acidic residues); the sequence is YSDDDYQNEQNEFEEEDYDSNDDENDSHD. A compositionally biased stretch (polar residues) spans 228 to 242; sequence KTTNQLKRKVSSSFT. Composition is skewed to low complexity over residues 243 to 325 and 365 to 397; these read NNNY…NNDS and NNINANNNNNNNNNNNNNNNLNDSTPNNQTNND. Residues 398-422 are compositionally biased toward polar residues; the sequence is LKSSNHSNYDFNYNTNERLSHSPIQ. Over residues 423-442 the composition is skewed to low complexity; the sequence is THSSSNNSTPSNQSPTFPSN. 2 stretches are compositionally biased toward polar residues: residues 443 to 457 and 496 to 509; these read YISQNANINYNPNQG and NNNVETNQDNVQQQ.

This is an uncharacterized protein from Dictyostelium discoideum (Social amoeba).